The chain runs to 223 residues: Ribonuclease 3 (223 aa).

Residues 3 to 125 (LERLQKKLSY…IIAAIYLDAG (123 aa)) enclose the RNase III domain. E38 lines the Mg(2+) pocket. Residue D42 is part of the active site. Residues D111 and E114 each coordinate Mg(2+). E114 is a catalytic residue. A DRBM domain is found at 152–222 (DPKTRLQEFL…AEQVLAKLTT (71 aa)).

The protein belongs to the ribonuclease III family. As to quaternary structure, homodimer. The cofactor is Mg(2+).

The protein resides in the cytoplasm. The catalysed reaction is Endonucleolytic cleavage to 5'-phosphomonoester.. Digests double-stranded RNA. Involved in the processing of primary rRNA transcript to yield the immediate precursors to the large and small rRNAs (23S and 16S). Processes some mRNAs, and tRNAs when they are encoded in the rRNA operon. Processes pre-crRNA and tracrRNA of type II CRISPR loci if present in the organism. The chain is Ribonuclease 3 from Actinobacillus pleuropneumoniae serotype 5b (strain L20).